The chain runs to 309 residues: Foldase protein PrsA 2 (309 aa).

Residues 1-22 (MKQMNKLITGVVTLATVVTLSA) form the signal peptide. Residue Cys23 is the site of N-palmitoyl cysteine attachment. Cys23 carries the S-diacylglycerol cysteine lipid modification. The PpiC domain occupies 146 to 241 (TPTMTAEIMQ…RTYHIIKVTK (96 aa)).

The protein belongs to the PrsA family.

Its subcellular location is the cell membrane. It carries out the reaction [protein]-peptidylproline (omega=180) = [protein]-peptidylproline (omega=0). Its function is as follows. Plays a major role in protein secretion by helping the post-translocational extracellular folding of several secreted proteins. The polypeptide is Foldase protein PrsA 2 (prsA2) (Streptococcus pyogenes serotype M1).